The following is a 158-amino-acid chain: Small ribosomal subunit protein uS7 (158 aa).

It belongs to the universal ribosomal protein uS7 family. As to quaternary structure, part of the 30S ribosomal subunit. Contacts proteins S9 and S11.

Its function is as follows. One of the primary rRNA binding proteins, it binds directly to 16S rRNA where it nucleates assembly of the head domain of the 30S subunit. Is located at the subunit interface close to the decoding center, probably blocks exit of the E-site tRNA. This is Small ribosomal subunit protein uS7 from Christiangramia forsetii (strain DSM 17595 / CGMCC 1.15422 / KT0803) (Gramella forsetii).